A 1082-amino-acid polypeptide reads, in one-letter code: CRISPR-associated endonuclease Cas9 (1082 aa).

Catalysis depends on D16, which acts as the For RuvC-like nuclease domain. Mg(2+) contacts are provided by D16, E504, and E508. The region spanning 512–667 is the HNH Cas9-type domain; it reads SFKDRKEIEK…DEDGFKERNL (156 aa). H588 serves as the catalytic Proton acceptor for HNH nuclease domain. H723 is a Mg(2+) binding site.

The protein belongs to the CRISPR-associated protein Cas9 family. Subtype II-C subfamily. Monomer. Binds crRNA and tracrRNA. Mg(2+) serves as cofactor.

Its function is as follows. CRISPR (clustered regularly interspaced short palindromic repeat) is an adaptive immune system that provides protection against mobile genetic elements (viruses, transposable elements and conjugative plasmids). CRISPR clusters contain spacers, sequences complementary to antecedent mobile elements, and target invading nucleic acids. CRISPR clusters are transcribed and processed into CRISPR RNA (crRNA). In type II CRISPR systems correct processing of pre-crRNA requires a trans-encoded small RNA (tracrRNA), endogenous ribonuclease 3 (rnc) and this protein. The tracrRNA serves as a guide for ribonuclease 3-aided processing of pre-crRNA. Subsequently Cas9/crRNA/tracrRNA endonucleolytically cleaves linear or circular dsDNA target complementary to the spacer; Cas9 is inactive in the absence of the 2 guide RNAs (gRNA). Cas9 recognizes the protospacer adjacent motif (PAM) in the CRISPR repeat sequences to help distinguish self versus nonself, as targets within the bacterial CRISPR locus do not have PAMs. PAM recognition is also required for catalytic activity. Cuts target DNA in Cas9:gRNAs mixing experiments with C.jejuni strain NCTC 11168 and P.multocoda strain Pm70. This Neisseria meningitidis serogroup A / serotype 4A (strain DSM 15465 / Z2491) protein is CRISPR-associated endonuclease Cas9.